Here is a 295-residue protein sequence, read N- to C-terminus: Ribosomal RNA small subunit methyltransferase A (295 aa).

Residues Asn33, Val35, Gly60, Glu81, Asp111, and Asn129 each coordinate S-adenosyl-L-methionine.

Belongs to the class I-like SAM-binding methyltransferase superfamily. rRNA adenine N(6)-methyltransferase family. RsmA subfamily.

Its subcellular location is the cytoplasm. It carries out the reaction adenosine(1518)/adenosine(1519) in 16S rRNA + 4 S-adenosyl-L-methionine = N(6)-dimethyladenosine(1518)/N(6)-dimethyladenosine(1519) in 16S rRNA + 4 S-adenosyl-L-homocysteine + 4 H(+). Specifically dimethylates two adjacent adenosines (A1518 and A1519) in the loop of a conserved hairpin near the 3'-end of 16S rRNA in the 30S particle. May play a critical role in biogenesis of 30S subunits. This Corynebacterium diphtheriae (strain ATCC 700971 / NCTC 13129 / Biotype gravis) protein is Ribosomal RNA small subunit methyltransferase A.